The sequence spans 96 residues: Large ribosomal subunit protein bL28 (96 aa).

Residues 1–21 (MSRVCELTGKGPMTGNNVSHA) form a disordered region.

This sequence belongs to the bacterial ribosomal protein bL28 family.

The sequence is that of Large ribosomal subunit protein bL28 from Jannaschia sp. (strain CCS1).